The sequence spans 84 residues: Putative membrane protein insertion efficiency factor (84 aa).

This sequence belongs to the UPF0161 family.

The protein resides in the cell inner membrane. Functionally, could be involved in insertion of integral membrane proteins into the membrane. The sequence is that of Putative membrane protein insertion efficiency factor from Shewanella denitrificans (strain OS217 / ATCC BAA-1090 / DSM 15013).